Consider the following 66-residue polypeptide: Large ribosomal subunit protein bL33c (66 aa).

Belongs to the bacterial ribosomal protein bL33 family.

The protein resides in the plastid. The protein localises to the chloroplast. In Vitis vinifera (Grape), this protein is Large ribosomal subunit protein bL33c.